We begin with the raw amino-acid sequence, 216 residues long: 3-isopropylmalate dehydratase small subunit (216 aa).

This sequence belongs to the LeuD family. LeuD type 1 subfamily. As to quaternary structure, heterodimer of LeuC and LeuD.

It catalyses the reaction (2R,3S)-3-isopropylmalate = (2S)-2-isopropylmalate. It functions in the pathway amino-acid biosynthesis; L-leucine biosynthesis; L-leucine from 3-methyl-2-oxobutanoate: step 2/4. In terms of biological role, catalyzes the isomerization between 2-isopropylmalate and 3-isopropylmalate, via the formation of 2-isopropylmaleate. The protein is 3-isopropylmalate dehydratase small subunit of Acinetobacter baylyi (strain ATCC 33305 / BD413 / ADP1).